The chain runs to 222 residues: Uracil-DNA glycosylase (222 aa).

The Proton acceptor role is filled by aspartate 61.

It belongs to the uracil-DNA glycosylase (UDG) superfamily. UNG family.

It is found in the cytoplasm. The catalysed reaction is Hydrolyzes single-stranded DNA or mismatched double-stranded DNA and polynucleotides, releasing free uracil.. Excises uracil residues from the DNA which can arise as a result of misincorporation of dUMP residues by DNA polymerase or due to deamination of cytosine. The chain is Uracil-DNA glycosylase from Aeromonas hydrophila subsp. hydrophila (strain ATCC 7966 / DSM 30187 / BCRC 13018 / CCUG 14551 / JCM 1027 / KCTC 2358 / NCIMB 9240 / NCTC 8049).